Here is a 227-residue protein sequence, read N- to C-terminus: Ubiquitin domain-containing protein 1 (227 aa).

The segment at 1 to 35 is disordered; the sequence is MGNCVGRQRRERPAAPGHPRKRAGRNEPLKKERLK. Positions 24–35 are enriched in basic and acidic residues; the sequence is GRNEPLKKERLK. The region spanning 149–224 is the Ubiquitin-like domain; the sequence is FPLKVRLSTG…IQVIINQPPP (76 aa).

Interacts with UBTD1.

Its function is as follows. May be involved in the regulation of cellular senescence through a positive feedback loop with TP53. Is a TP53 downstream target gene that increases the stability of TP53 protein by promoting the ubiquitination and degradation of MDM2. In Homo sapiens (Human), this protein is Ubiquitin domain-containing protein 1 (UBTD1).